A 353-amino-acid chain; its full sequence is MRPARALIDLDALRHNYHLARSRHGGRALAVVKANAYGHGAAQCARALAADADGFAVGFLEEALELRAAGIDQPILLLEGVFAPAELDEVVRHDLWIVVHHAEQLRIIDHARPALPLEVWLKMNSGMNRAGFLSHELRPAWQRLKDSGKVGGITLMTHFARADEPQVLATTEQLTAFDTATRELPGPRSLANSGAILGWPAAHRDWARPGILLYGADPMPDEPNGLRPVMTLESAVIAVREIPAGAPLGYGARFHAERATRAGLVALGYADGYPRSVPNGTPVAVDGLRTRLIGRVSMDLLTIDLTDLPDAGLGSRVELWGANIPVNRIAQAAKTISYELLCNVKRVRFEYSG.

The active-site Proton acceptor; specific for D-alanine is the Lys33. Lys33 carries the N6-(pyridoxal phosphate)lysine modification. Substrate is bound at residue Arg129. Tyr250 (proton acceptor; specific for L-alanine) is an active-site residue. Residue Met298 coordinates substrate.

The protein belongs to the alanine racemase family. It depends on pyridoxal 5'-phosphate as a cofactor.

It catalyses the reaction L-alanine = D-alanine. It participates in amino-acid biosynthesis; D-alanine biosynthesis; D-alanine from L-alanine: step 1/1. Catalyzes the interconversion of L-alanine and D-alanine. May also act on other amino acids. In Aromatoleum aromaticum (strain DSM 19018 / LMG 30748 / EbN1) (Azoarcus sp. (strain EbN1)), this protein is Alanine racemase (alr).